Reading from the N-terminus, the 235-residue chain is Chromosome partition protein MukE (235 aa).

A disordered region spans residues 204-235 (QQEPSQSSLLDGFDADDTGHHDSELTMQEGEV).

This sequence belongs to the MukE family. Interacts, and probably forms a ternary complex, with MukF and MukB. The complex formation is stimulated by calcium or magnesium.

Its subcellular location is the cytoplasm. The protein localises to the nucleoid. Functionally, involved in chromosome condensation, segregation and cell cycle progression. May participate in facilitating chromosome segregation by condensation DNA from both sides of a centrally located replisome during cell division. Probably acts via its interaction with MukB and MukF. The chain is Chromosome partition protein MukE from Photobacterium profundum (strain SS9).